Here is a 183-residue protein sequence, read N- to C-terminus: Dual-action ribosomal maturation protein DarP (183 aa).

The protein belongs to the DarP family.

The protein localises to the cytoplasm. In terms of biological role, member of a network of 50S ribosomal subunit biogenesis factors which assembles along the 30S-50S interface, preventing incorrect 23S rRNA structures from forming. Promotes peptidyl transferase center (PTC) maturation. The polypeptide is Dual-action ribosomal maturation protein DarP (Shigella flexneri).